A 179-amino-acid polypeptide reads, in one-letter code: Inner membrane-spanning protein YciB (179 aa).

5 consecutive transmembrane segments (helical) span residues 22-42, 50-70, 76-96, 121-141, and 149-169; these read IYAATTALIVATAIVLIYSWV, MALITFVLVVVFGGLTLFFHN, WKVTVIYALFAGALLVSQWVM, LAWAVFFILCGLANIYIAFWL, and FKVFGLTALTLIFTLLSGIYI.

It belongs to the YciB family.

It localises to the cell inner membrane. Functionally, plays a role in cell envelope biogenesis, maintenance of cell envelope integrity and membrane homeostasis. This Shigella dysenteriae serotype 1 (strain Sd197) protein is Inner membrane-spanning protein YciB.